A 214-amino-acid chain; its full sequence is Adenylate kinase (214 aa).

10-15 (GAGKGT) is a binding site for ATP. The NMP stretch occupies residues 30-59 (STGDMLRAAVKAGTPLGLEAKKVMDAGQLV). AMP-binding positions include T31, R36, 57 to 59 (QLV), 85 to 88 (GFPR), and Q92. The segment at 122–159 (GRRVHSGSGRVYHVVFNPPKVEGKDDVTGEDLSIRPDD) is LID. ATP is bound by residues R123 and 132-133 (VY). Residues R156 and R167 each contribute to the AMP site. Q200 provides a ligand contact to ATP.

This sequence belongs to the adenylate kinase family. In terms of assembly, monomer.

The protein localises to the cytoplasm. The enzyme catalyses AMP + ATP = 2 ADP. Its pathway is purine metabolism; AMP biosynthesis via salvage pathway; AMP from ADP: step 1/1. Catalyzes the reversible transfer of the terminal phosphate group between ATP and AMP. Plays an important role in cellular energy homeostasis and in adenine nucleotide metabolism. This Shewanella frigidimarina (strain NCIMB 400) protein is Adenylate kinase.